The sequence spans 368 residues: Ribosomal RNA large subunit methyltransferase M (368 aa).

S-adenosyl-L-methionine-binding positions include Ser189, 222-225, Asp241, Asp261, and Asp278; that span reads CPGG. The active-site Proton acceptor is the Lys307.

Belongs to the class I-like SAM-binding methyltransferase superfamily. RNA methyltransferase RlmE family. RlmM subfamily. Monomer.

Its subcellular location is the cytoplasm. It catalyses the reaction cytidine(2498) in 23S rRNA + S-adenosyl-L-methionine = 2'-O-methylcytidine(2498) in 23S rRNA + S-adenosyl-L-homocysteine + H(+). Functionally, catalyzes the 2'-O-methylation at nucleotide C2498 in 23S rRNA. In Yersinia enterocolitica serotype O:8 / biotype 1B (strain NCTC 13174 / 8081), this protein is Ribosomal RNA large subunit methyltransferase M.